An 82-amino-acid polypeptide reads, in one-letter code: UPF0180 protein BC_1394 (82 aa).

It belongs to the UPF0180 family.

The chain is UPF0180 protein BC_1394 from Bacillus cereus (strain ATCC 14579 / DSM 31 / CCUG 7414 / JCM 2152 / NBRC 15305 / NCIMB 9373 / NCTC 2599 / NRRL B-3711).